Reading from the N-terminus, the 316-residue chain is N-acetylmuramic acid 6-phosphate etherase (316 aa).

An SIS domain is found at 66–229 (IVAAIGRGGR…STASMIRLGK (164 aa)). Residue E94 is the Proton donor of the active site. E125 is an active-site residue.

It belongs to the GCKR-like family. MurNAc-6-P etherase subfamily. In terms of assembly, homodimer.

The enzyme catalyses N-acetyl-D-muramate 6-phosphate + H2O = N-acetyl-D-glucosamine 6-phosphate + (R)-lactate. Its pathway is amino-sugar metabolism; 1,6-anhydro-N-acetylmuramate degradation. The protein operates within amino-sugar metabolism; N-acetylmuramate degradation. It participates in cell wall biogenesis; peptidoglycan recycling. Specifically catalyzes the cleavage of the D-lactyl ether substituent of MurNAc 6-phosphate, producing GlcNAc 6-phosphate and D-lactate. Together with AnmK, is also required for the utilization of anhydro-N-acetylmuramic acid (anhMurNAc) either imported from the medium or derived from its own cell wall murein, and thus plays a role in cell wall recycling. The polypeptide is N-acetylmuramic acid 6-phosphate etherase (Jannaschia sp. (strain CCS1)).